The following is a 73-amino-acid chain: Probable movement protein p8 (73 aa).

Positions 1–12 are enriched in polar residues; sequence MSTVETPAQDTL. Positions 1–48 are disordered; the sequence is MSTVETPAQDTLATKEPNKTGAKDRQQARSARLSVAAGAGRTALSQRD. The segment covering 16-27 has biased composition (basic and acidic residues); sequence EPNKTGAKDRQQ.

This sequence belongs to the carmovirus/necrovirus/panicovirus movement protein p8 family.

It is found in the host cell wall. Its function is as follows. Cell-to-cell movement. In Muhlenbergia (Blackwell switchgrass), this protein is Probable movement protein p8.